Here is a 138-residue protein sequence, read N- to C-terminus: Actin-related protein 2/3 complex subunit 5 (138 aa).

A disordered region spans residues 1 to 21 (MNYEDDNVESGQAGKSDAEYK).

The protein belongs to the ARPC5 family. As to quaternary structure, component of the Arp2/3 complex composed of arpB/Arp2, arpC/Arp3, arcA/p41-arc, arcB/p34-arc, arcC/p21-arc, arcD/p20-arc and arcE/p16-arc. Interacts with carmil (via the region between the LRR domain and COOH-terminal proline-rich domain); carmil is required for Arp2/3-dependent actin nucleation. Arp2/3 complex, MyoB, MyoC, and the alpha and beta subunits of capping protein all form a larger complex with carmil.

The protein localises to the cytoplasm. Its subcellular location is the cytoskeleton. The protein resides in the cytosol. It localises to the cell cortex. It is found in the cell projection. The protein localises to the pseudopodium. In terms of biological role, functions as a component of the Arp2/3 complex which is involved in regulation of actin polymerization and together with an activating nucleation-promoting factor (NPF) mediates the formation of branched actin networks. Seems to contact the pointed end of the daughter actin filament. The Arp2/3 complex is involved in organizing the actin system in cell motility and chemotaxis, in phagocytosis and macropinocytosis, at late steps of endosome processing, and in mitosis. In concert with a group of other proteins, the Arp2/3 complex plays a general role in the rapid activation and adaptation of the actin system to its multiple functions. In Dictyostelium discoideum (Social amoeba), this protein is Actin-related protein 2/3 complex subunit 5 (arcE).